Reading from the N-terminus, the 180-residue chain is NAD(P)H-quinone oxidoreductase subunit I, chloroplastic (180 aa).

2 consecutive 4Fe-4S ferredoxin-type domains span residues 55–84 (GRIH…VDWR) and 95–124 (LNYS…MTEE). Residues C64, C67, C70, C74, C104, C107, C110, and C114 each coordinate [4Fe-4S] cluster.

The protein belongs to the complex I 23 kDa subunit family. In terms of assembly, NDH is composed of at least 16 different subunits, 5 of which are encoded in the nucleus. [4Fe-4S] cluster is required as a cofactor.

The protein localises to the plastid. The protein resides in the chloroplast thylakoid membrane. It carries out the reaction a plastoquinone + NADH + (n+1) H(+)(in) = a plastoquinol + NAD(+) + n H(+)(out). The enzyme catalyses a plastoquinone + NADPH + (n+1) H(+)(in) = a plastoquinol + NADP(+) + n H(+)(out). Its function is as follows. NDH shuttles electrons from NAD(P)H:plastoquinone, via FMN and iron-sulfur (Fe-S) centers, to quinones in the photosynthetic chain and possibly in a chloroplast respiratory chain. The immediate electron acceptor for the enzyme in this species is believed to be plastoquinone. Couples the redox reaction to proton translocation, and thus conserves the redox energy in a proton gradient. This is NAD(P)H-quinone oxidoreductase subunit I, chloroplastic from Zea mays (Maize).